The sequence spans 758 residues: Ribosomal RNA processing protein 1 homolog B (758 aa).

The residue at position 245 (Ser245) is a Phosphoserine. A compositionally biased stretch (basic residues) spans 259–272; sequence AVSKKKTALGKNHS. The segment at 259–285 is disordered; the sequence is AVSKKKTALGKNHSRKDGLSDERGRDD. A compositionally biased stretch (basic and acidic residues) spans 273–285; the sequence is RKDGLSDERGRDD. Ser350, Ser392, Ser394, and Ser395 each carry phosphoserine. Residues 381-598 form a disordered region; that stretch reads GSRVFCVEEE…KTASLKKRKK (218 aa). Positions 397–408 are enriched in basic residues; sequence QKRRRKKKKKHH. The segment covering 447-457 has biased composition (low complexity); it reads GAEATSSTGEE. Ser452 and Ser458 each carry phosphoserine. Residues 469–481 show a composition bias toward basic residues; it reads HNKRKRPRKKSPR. The segment covering 498–513 has biased composition (low complexity); sequence SQSGPSGSHPQGPRGS. Ser513 bears the Phosphoserine mark. The span at 566 to 575 shows a compositional bias: basic residues; it reads QRRRLQKKKA. Ser579 carries the phosphoserine modification. Lys652 carries the post-translational modification N6-acetyllysine. The segment at 660-681 is disordered; it reads KSSTATHPPGPAVQLNKTPSSS. Residues Ser702 and Ser706 each carry the phosphoserine modification. The disordered stretch occupies residues 707 to 758; it reads PTGPSRVAFDPEQKPLHGVLKTPTSSPASSPLVAKKPLTTTPRRRPRAMDFF. At Arg712 the chain carries Citrulline. Thr728 carries the post-translational modification Phosphothreonine. Phosphoserine is present on residues Ser732, Ser735, and Ser736.

The protein belongs to the RRP1 family. In terms of assembly, interacts with the transcriptional activator E2F1. Interacts with serine/threonine-protein phosphatase PP1 subunits PPP1CB and PPP1CC but not with PPP1CA. Interacts with 60S ribosomal proteins RPL5 and RPL27, ribosomal processing protein RRP1/NNP1 and other nucleolar proteins including NOP2/NOL1 and FBL. Also interacts with nucleolar protein NPM1/B23. Interacts with splicing factor SRSF1 and with LUC7L3/CROP. Interacts with GTPase activator SIPA1. Interacts with CBX5/HP1alpha, H1-10, NCL, PARP1, TRIM28 and YBX3. (Microbial infection) Interacts with influenza A virus nucleoprotein NP and with RNA-directed RNA polymerase subunits PB1 and PB2. In terms of processing, citrullinated by PADI4.

Its subcellular location is the nucleus. The protein resides in the nucleolus. It localises to the nucleoplasm. It is found in the chromosome. Functionally, positively regulates DNA damage-induced apoptosis by acting as a transcriptional coactivator of proapoptotic target genes of the transcriptional activator E2F1. Likely to play a role in ribosome biogenesis by targeting serine/threonine protein phosphatase PP1 to the nucleolus. Involved in regulation of mRNA splicing. Inhibits SIPA1 GTPase activity. Involved in regulating expression of extracellular matrix genes. Associates with chromatin and may play a role in modulating chromatin structure. Its function is as follows. (Microbial infection) Following influenza A virus (IAV) infection, promotes viral mRNA transcription by facilitating the binding of IAV RNA-directed RNA polymerase to capped mRNA. The protein is Ribosomal RNA processing protein 1 homolog B (RRP1B) of Homo sapiens (Human).